Consider the following 1440-residue polypeptide: Pentatricopeptide repeat-containing protein At3g18110, chloroplastic (1440 aa).

The transit peptide at 1-44 (MAVSAGALAFPALSVRATLNPEIKDEQANISSTTSSSQKFTYSR) directs the protein to the chloroplast. A compositionally biased stretch (polar residues) spans 63–72 (TPSQTLSSPV). The interval 63–84 (TPSQTLSSPVSPIAGTPDSGDV) is disordered. PPR repeat units lie at residues 224-258 (RVQVYNAMMGVYSRSGKFSKAQELVDAMRQRGCVP), 259-295 (DLISFNTLINARLKSGGLTPNLAVELLDMVRNSGLRP), 296-330 (DAITYNTLLSACSRDSNLDGAVKVFEDMEAHRCQP), 331-365 (DLWTYNAMISVYGRCGLAAEAERLFMELELKGFFP), 366-400 (DAVTYNSLLYAFARERNTEKVKEVYQQMQKMGFGK), 401-431 (DEMTYNTIIHMYGKQGQLDLALQLYKDMKGL), 437-471 (DAITYTVLIDSLGKANRTVEAAALMSEMLDVGIKP), 472-506 (TLQTYSALICGYAKAGKREEAEDTFSCMLRSGTKP), 507-541 (DNLAYSVMLDVLLRGNETRKAWGLYRDMISDGHTP), 542-572 (SYTLYELMILGLMKENRSDDIQKTIRDMEEL), 608-638 (ENDTLLSILGSYSSSGRHSEAFELLEFLKEH), 643-678 (KRLITEALIVLHCKVNNLSAALDEYFADPCVHGWCF), 680-714 (SSTMYETLLHCCVANEHYAEASQVFSDLRLSGCEA), 715-749 (SESVCKSMVVVYCKLGFPETAHQVVNQAETKGFHF), 751-785 (CSPMYTDIIEAYGKQKLWQKAESVVGNLRQSGRTP), 786-820 (DLKTWNSLMSAYAQCGCYERARAIFNTMMRDGPSP), 821-855 (TVESINILLHALCVDGRLEELYVVVEELQDMGFKI), 856-890 (SKSSILLMLDAFARAGNIFEVKKIYSSMKAAGYLP), 891-925 (TIRLYRMMIELLCKGKRVRDAEIMVSEMEEANFKV), 926-960 (ELAIWNSMLKMYTAIEDYKKTVQVYQRIKETGLEP), 961-995 (DETTYNTLIIMYCRDRRPEEGYLLMQQMRNLGLDP), 996-1030 (KLDTYKSLISAFGKQKCLEQAEQLFEELLSKGLKL), 1031-1065 (DRSFYHTMMKISRDSGSDSKAEKLLQMMKNAGIEP), 1066-1100 (TLATMHLLMVSYSSSGNPQEAEKVLSNLKDTEVEL), and 1101-1135 (TTLPYSSVIDAYLRSKDYNSGIERLLEMKKEGLEP). Residues 1419–1440 (KKKKMGNETNGINTRRKFVRSK) form a disordered region.

The protein belongs to the PPR family. P subfamily.

It localises to the plastid. The protein localises to the chloroplast. Functionally, may play a role in embryogenesis. The protein is Pentatricopeptide repeat-containing protein At3g18110, chloroplastic (EMB1270) of Arabidopsis thaliana (Mouse-ear cress).